The chain runs to 498 residues: Trichoplein keratin filament-binding protein (498 aa).

Residues Cys-11–Arg-39 are a coiled coil. Residues Lys-50 and Lys-57 each participate in a glycyl lysine isopeptide (Lys-Gly) (interchain with G-Cter in ubiquitin) cross-link. 3 coiled-coil regions span residues Ala-66 to Glu-136, Val-163 to Glu-353, and Leu-380 to Thr-479. The interaction with keratin proteins stretch occupies residues Lys-73–Asn-498. Residues Glu-167–Asn-189 are disordered. A compositionally biased stretch (basic and acidic residues) spans Met-168–Asn-189. The segment at Lys-259–Glu-425 is trichohyalin/plectin homology domain. The segment at Gln-447 to Asn-498 is disordered.

Belongs to the TCHP family. Interacts specifically with keratin proteins including, KRT5, KRT6A, KRT8, KRT14, KRT16 and KRT18. Interacts with KCTD17. Post-translationally, ubiquitinated. Ubiquitination by the BCR(KCTD17) E3 ubiquitin ligase complex results in proteasomal degradation, and induces ciliogenesis. As to expression, expressed at high levels in normal urothelial and breast epithelial cells. Also expressed in the smooth muscle and endothelial cells. Reduced expression seen in advanced bladder and breast carcinomas (at protein level). Ubiquitous. Expressed at highest levels in the heart, skeletal muscle, kidney, liver and testis.

The protein localises to the cytoplasm. Its subcellular location is the cytoskeleton. It localises to the cell membrane. It is found in the mitochondrion. The protein resides in the cell junction. The protein localises to the desmosome. Its subcellular location is the microtubule organizing center. It localises to the centrosome. Its function is as follows. Tumor suppressor which has the ability to inhibit cell growth and be pro-apoptotic during cell stress. Inhibits cell growth in bladder and prostate cancer cells by a down-regulation of HSPB1 by inhibiting its phosphorylation. May act as a 'capping' or 'branching' protein for keratin filaments in the cell periphery. May regulate K8/K18 filament and desmosome organization mainly at the apical or peripheral regions of simple epithelial cells. Is a negative regulator of ciliogenesis. This Homo sapiens (Human) protein is Trichoplein keratin filament-binding protein.